We begin with the raw amino-acid sequence, 72 residues long: Translation initiation factor IF-1 (72 aa).

One can recognise an S1-like domain in the interval 1 to 72; the sequence is MPKDDSIEVE…TRGRITYRAK (72 aa).

This sequence belongs to the IF-1 family. Component of the 30S ribosomal translation pre-initiation complex which assembles on the 30S ribosome in the order IF-2 and IF-3, IF-1 and N-formylmethionyl-tRNA(fMet); mRNA recruitment can occur at any time during PIC assembly.

Its subcellular location is the cytoplasm. In terms of biological role, one of the essential components for the initiation of protein synthesis. Stabilizes the binding of IF-2 and IF-3 on the 30S subunit to which N-formylmethionyl-tRNA(fMet) subsequently binds. Helps modulate mRNA selection, yielding the 30S pre-initiation complex (PIC). Upon addition of the 50S ribosomal subunit IF-1, IF-2 and IF-3 are released leaving the mature 70S translation initiation complex. The polypeptide is Translation initiation factor IF-1 (Myxococcus xanthus (strain DK1622)).